A 967-amino-acid chain; its full sequence is Siderophore exporter MmpL4 (967 aa).

Helical transmembrane passes span 26–46, 210–230, 242–262, 303–323, 333–353, 384–404, 769–789, 793–813, 821–841, 875–895, and 913–934; these read AFAV…TVFV, VIFI…LLLI, VVAV…VSLL, AHVI…LSFA, IPCA…GPAV, WPLP…LALP, WDLL…MLII, FIAA…SFGL, ILAI…LLAV, VVTN…VSDL, and TLIV…WFWW. The segment at 943 to 967 is disordered; that stretch reads ARTPTVPSETQPAGRPLAMSSDRLG.

Belongs to the resistance-nodulation-cell division (RND) (TC 2.A.6) family. MmpL subfamily. Interacts with MmpS4.

Its subcellular location is the cell inner membrane. Part of an export system, which is required for biosynthesis and secretion of siderophores. The polypeptide is Siderophore exporter MmpL4 (mmpL4) (Mycobacterium tuberculosis (strain CDC 1551 / Oshkosh)).